Here is a 236-residue protein sequence, read N- to C-terminus: 2,3,4,5-tetrahydropyridine-2,6-dicarboxylate N-acetyltransferase (236 aa).

This sequence belongs to the transferase hexapeptide repeat family. DapH subfamily.

The catalysed reaction is (S)-2,3,4,5-tetrahydrodipicolinate + acetyl-CoA + H2O = L-2-acetamido-6-oxoheptanedioate + CoA. Its pathway is amino-acid biosynthesis; L-lysine biosynthesis via DAP pathway; LL-2,6-diaminopimelate from (S)-tetrahydrodipicolinate (acetylase route): step 1/3. Its function is as follows. Catalyzes the transfer of an acetyl group from acetyl-CoA to tetrahydrodipicolinate. This chain is 2,3,4,5-tetrahydropyridine-2,6-dicarboxylate N-acetyltransferase, found in Geobacillus sp. (strain WCH70).